The chain runs to 291 residues: Shikimate dehydrogenase (NADP(+)) (291 aa).

Shikimate contacts are provided by residues 26–28 (SLS) and serine 73. Lysine 77 (proton acceptor) is an active-site residue. Shikimate is bound by residues asparagine 98 and aspartate 113. Residues 137–141 (GAGGA) and valine 238 each bind NADP(+). Tyrosine 240 serves as a coordination point for shikimate. Glycine 261 lines the NADP(+) pocket.

Belongs to the shikimate dehydrogenase family. In terms of assembly, homodimer.

It carries out the reaction shikimate + NADP(+) = 3-dehydroshikimate + NADPH + H(+). Its pathway is metabolic intermediate biosynthesis; chorismate biosynthesis; chorismate from D-erythrose 4-phosphate and phosphoenolpyruvate: step 4/7. Involved in the biosynthesis of the chorismate, which leads to the biosynthesis of aromatic amino acids. Catalyzes the reversible NADPH linked reduction of 3-dehydroshikimate (DHSA) to yield shikimate (SA). The polypeptide is Shikimate dehydrogenase (NADP(+)) (Listeria innocua serovar 6a (strain ATCC BAA-680 / CLIP 11262)).